The sequence spans 166 residues: Succinate dehydrogenase [ubiquinone] cytochrome b small subunit, mitochondrial (166 aa).

At 1–65 (MASVARSSAL…VPPPSPSHGS (65 aa)) the chain is on the mitochondrial matrix side. The helical transmembrane segment at 66 to 87 (YHWTFDRVVAAGLIPLTVAPFA) threads the bilayer. Over 88–94 (AGSLNPT) the chain is Mitochondrial intermembrane. The helical transmembrane segment at 95 to 115 (MDAVLAATILIHSHTGFGNII) threads the bilayer. H106 contacts heme. At 116–124 (VDYVPSKRV) the chain is on the mitochondrial matrix side. Residue Y118 coordinates a ubiquinone. The chain crosses the membrane as a helical span at residues 125 to 149 (PKARKVFTWGLNAATVLVGLALYEF). Residues 150–166 (ETTDVGLTETIKRVWKA) are Mitochondrial intermembrane-facing.

This sequence belongs to the CybS family. As to quaternary structure, forms part of complex II containing four subunits: a flavoprotein (FP), an iron-sulfur protein (IP) and a cytochrome b composed of a large and a small subunit.

It localises to the mitochondrion inner membrane. It functions in the pathway carbohydrate metabolism; tricarboxylic acid cycle. Functionally, membrane-anchoring subunit of succinate dehydrogenase (SDH) that is involved in complex II of the mitochondrial electron transport chain and is responsible for transferring electrons from succinate to ubiquinone (coenzyme Q). In Neurospora crassa (strain ATCC 24698 / 74-OR23-1A / CBS 708.71 / DSM 1257 / FGSC 987), this protein is Succinate dehydrogenase [ubiquinone] cytochrome b small subunit, mitochondrial.